Here is a 570-residue protein sequence, read N- to C-terminus: Urease subunit alpha 1 (570 aa).

The Urease domain maps to 131–570 (GGIDTHVHFI…VPMAQRYFLF (440 aa)). 3 residues coordinate Ni(2+): His-136, His-138, and Lys-219. Lys-219 is modified (N6-carboxylysine). Position 221 (His-221) interacts with substrate. Residues His-248 and His-274 each contribute to the Ni(2+) site. His-322 functions as the Proton donor in the catalytic mechanism. Residue Asp-362 coordinates Ni(2+).

The protein belongs to the metallo-dependent hydrolases superfamily. Urease alpha subunit family. Heterotrimer of UreA (gamma), UreB (beta) and UreC (alpha) subunits. Three heterotrimers associate to form the active enzyme. Requires Ni cation as cofactor. In terms of processing, carboxylation allows a single lysine to coordinate two nickel ions.

The protein localises to the cytoplasm. The enzyme catalyses urea + 2 H2O + H(+) = hydrogencarbonate + 2 NH4(+). Its pathway is nitrogen metabolism; urea degradation; CO(2) and NH(3) from urea (urease route): step 1/1. In terms of biological role, disrupting the ure1 operon causes loss of urease activity, decreased resistance to low pH killing in vitro and decreased pathogen survival when inoculated in BALB/c mice by gavage. This chain is Urease subunit alpha 1, found in Brucella suis biovar 1 (strain 1330).